The sequence spans 124 residues: MVEPNISSYLQNQLKQAQELEENIEKIATQRYQLDLSLKEIEKTLQELNKIDDKTPVYRSIGSILYKVDDKKKLIDELEEQLELTKIRINTLDKQQKSLEEKYKELQAAIRERYNQDNKKGAVS.

It belongs to the prefoldin subunit beta family. Heterohexamer of two alpha and four beta subunits.

It localises to the cytoplasm. Its function is as follows. Molecular chaperone capable of stabilizing a range of proteins. Seems to fulfill an ATP-independent, HSP70-like function in archaeal de novo protein folding. This chain is Prefoldin subunit beta (pfdB), found in Thermoplasma volcanium (strain ATCC 51530 / DSM 4299 / JCM 9571 / NBRC 15438 / GSS1).